The chain runs to 414 residues: 4-hydroxy-3-methylbut-2-en-1-yl diphosphate synthase (flavodoxin) (414 aa).

Positions 304, 307, 350, and 357 each coordinate [4Fe-4S] cluster.

This sequence belongs to the IspG family. [4Fe-4S] cluster serves as cofactor.

It carries out the reaction (2E)-4-hydroxy-3-methylbut-2-enyl diphosphate + oxidized [flavodoxin] + H2O + 2 H(+) = 2-C-methyl-D-erythritol 2,4-cyclic diphosphate + reduced [flavodoxin]. The protein operates within isoprenoid biosynthesis; isopentenyl diphosphate biosynthesis via DXP pathway; isopentenyl diphosphate from 1-deoxy-D-xylulose 5-phosphate: step 5/6. In terms of biological role, converts 2C-methyl-D-erythritol 2,4-cyclodiphosphate (ME-2,4cPP) into 1-hydroxy-2-methyl-2-(E)-butenyl 4-diphosphate. The chain is 4-hydroxy-3-methylbut-2-en-1-yl diphosphate synthase (flavodoxin) from Aromatoleum aromaticum (strain DSM 19018 / LMG 30748 / EbN1) (Azoarcus sp. (strain EbN1)).